A 164-amino-acid polypeptide reads, in one-letter code: uncharacterized protein (164 aa).

Ser-117 carries the post-translational modification Phosphoserine.

This is an uncharacterized protein from Bacillus subtilis (strain 168).